The chain runs to 2646 residues: Probable inactive serine/threonine-protein kinase roco10 (2646 aa).

7 disordered regions span residues 28–122 (LNYS…LSGG), 138–168 (NIPI…KDKD), 205–248 (PLFI…VSPS), 281–457 (QQQR…VKQA), 477–516 (MSKL…HTSP), 605–656 (TSPN…PHQY), and 882–907 (QSSS…STPS). The span at 46–56 (PQQNLLENDTL) shows a compositional bias: polar residues. 3 stretches are compositionally biased toward low complexity: residues 78–115 (IITT…TSPS), 147–161 (SPTS…NNNN), and 215–228 (SRNN…GGNK). The span at 235-248 (KISSTSAAGDVSPS) shows a compositional bias: polar residues. 2 stretches are compositionally biased toward low complexity: residues 285–297 (NGNN…NNNN) and 325–334 (NNNNNNNNNN). Residues 335–345 (KQPQHPMNGNH) are compositionally biased toward polar residues. Positions 346–394 (SPSNGTSGSLSMSGSGIDNGGNNNNNSNTHGSSSNQSSGVTSPIIQSTS) are enriched in low complexity. Composition is skewed to polar residues over residues 402-416 (GLNS…SSPT) and 428-443 (TSAS…PLMN). 5 stretches are compositionally biased toward low complexity: residues 444 to 454 (STGVSSSSSGV), 491 to 516 (PSSP…HTSP), 605 to 627 (TSPN…NSSP), 634 to 651 (QQQQ…NTNT), and 883 to 907 (SSSS…STPS). The Rho-GAP domain maps to 585 to 807 (SSISPISTAA…MFIQQADILF (223 aa)). LRR repeat units lie at residues 968-987 (QKLD…IKQL), 989-1011 (DLQE…ARLT), 1012-1033 (SLRT…MADF), 1040-1061 (NLEN…YTWL), 1062-1083 (KLKT…IFQI), 1085-1108 (TLEV…CTST), 1109-1131 (KLRS…INLV), 1132-1154 (ELQV…QKLT), 1155-1176 (SLTE…LLLL), 1178-1199 (NLKK…IHRM), 1201-1222 (SLIE…IVAL), 1224-1247 (KLNS…YIQK), 1248-1270 (GKEG…YRTR), 1271-1298 (IIML…SFSS), and 1303-1327 (LPSL…ILDI). One can recognise a Roc domain in the interval 1262–1474 (TNVPCYRTRI…RDIKQMIAKN (213 aa)). Disordered regions lie at residues 1293-1317 (KSSF…SNNS), 1651-1670 (NNNN…SRSM), and 1957-2026 (NNSS…KEKE). The segment covering 1651–1669 (NNNNSNGNNVGRGRSGSRS) has biased composition (low complexity). A compositionally biased stretch (polar residues) spans 1966-1975 (PIASSRSNPK). Residues 1983–1996 (NLIQSNNNDNNNSL) show a composition bias toward low complexity. Positions 1997-2026 (SKKDLKELAKQNKEKEKEKEKDKDKEKEKE) are enriched in basic and acidic residues. The 294-residue stretch at 2049 to 2342 (FSICHFIKEI…PSKIISQLYT (294 aa)) folds into the Protein kinase domain. ATP-binding positions include 2055 to 2063 (IKEIDYREI) and lysine 2094. The RGS domain maps to 2412–2536 (MVVLNNKQST…FTVPTTNKNG (125 aa)).

It belongs to the protein kinase superfamily. TKL Ser/Thr protein kinase family. ROCO subfamily.

The polypeptide is Probable inactive serine/threonine-protein kinase roco10 (roco10) (Dictyostelium discoideum (Social amoeba)).